Here is a 181-residue protein sequence, read N- to C-terminus: MNVIKTEIPDVLIFEPKVFGDERGFFMESFNQKVFEEAVGRKVEFVQDNHSKSTKGVLRGLHYQLEPYAQGKLVRCVVGEVFDVAVDIRKSSPTFGKWVGVNLSAENKRQLWIPEGFAHGFCVLSDEAEFVYKTNNFYSKMQERGILWSDKSINIEWPVQNPLLSDKDINGQKFVDADYFI.

Residues arginine 23, glutamate 28, 47–49 (QDN), and arginine 59 contribute to the substrate site. The active-site Proton acceptor is histidine 62. Substrate-binding residues include lysine 72 and histidine 119. Tyrosine 132 serves as the catalytic Proton donor. Substrate-binding residues include glutamate 143 and lysine 167.

This sequence belongs to the dTDP-4-dehydrorhamnose 3,5-epimerase family. Homodimer.

The catalysed reaction is dTDP-4-dehydro-6-deoxy-alpha-D-glucose = dTDP-4-dehydro-beta-L-rhamnose. The protein operates within carbohydrate biosynthesis; dTDP-L-rhamnose biosynthesis. It participates in bacterial outer membrane biogenesis; LPS O-antigen biosynthesis. Functionally, catalyzes the epimerization of the C3' and C5'positions of dTDP-6-deoxy-D-xylo-4-hexulose, forming dTDP-6-deoxy-L-lyxo-4-hexulose. In Shigella flexneri, this protein is dTDP-4-dehydrorhamnose 3,5-epimerase (rfbC).